We begin with the raw amino-acid sequence, 861 residues long: Glucans biosynthesis glucosyltransferase H (861 aa).

The next 6 helical transmembrane spans lie at Phe-142–Ile-162, Val-188–Val-208, Val-516–Leu-536, Leu-573–Trp-593, Phe-600–Leu-620, and Phe-683–Ile-703.

The protein belongs to the glycosyltransferase 2 family. OpgH subfamily.

It is found in the cell inner membrane. The protein operates within glycan metabolism; osmoregulated periplasmic glucan (OPG) biosynthesis. Functionally, involved in the biosynthesis of osmoregulated periplasmic glucans (OPGs). This chain is Glucans biosynthesis glucosyltransferase H, found in Pseudomonas aeruginosa (strain UCBPP-PA14).